The chain runs to 119 residues: Ribosome-binding factor A (119 aa).

The protein belongs to the RbfA family. As to quaternary structure, monomer. Binds 30S ribosomal subunits, but not 50S ribosomal subunits or 70S ribosomes.

It is found in the cytoplasm. One of several proteins that assist in the late maturation steps of the functional core of the 30S ribosomal subunit. Associates with free 30S ribosomal subunits (but not with 30S subunits that are part of 70S ribosomes or polysomes). Required for efficient processing of 16S rRNA. May interact with the 5'-terminal helix region of 16S rRNA. In Coxiella burnetii (strain CbuK_Q154) (Coxiella burnetii (strain Q154)), this protein is Ribosome-binding factor A.